We begin with the raw amino-acid sequence, 478 residues long: Islet cell autoantigen 1 (478 aa).

Residues 50 to 253 (ASDADLDAKL…TSHTMAAIHE (204 aa)) form the AH domain. The span at 306-317 (EHKDSSAYKTEE) shows a compositional bias: basic and acidic residues. Disordered stretches follow at residues 306 to 365 (EHKD…SGDK) and 398 to 422 (LKEPAPMGAQGEPDPKPQIGSGFLP).

As to expression, predominantly expressed in brain, pancreas and stomach mucosa. High expression also found in stomach muscle and testis.

The protein resides in the cytoplasm. The protein localises to the cytosol. It is found in the golgi apparatus membrane. Its subcellular location is the cytoplasmic vesicle. It localises to the secretory vesicle membrane. The protein resides in the secretory vesicle. The protein localises to the synaptic vesicle membrane. In terms of biological role, may play a role in neurotransmitter secretion. This Mus musculus (Mouse) protein is Islet cell autoantigen 1.